A 779-amino-acid polypeptide reads, in one-letter code: Acyl-homoserine lactone acylase PvdQ (779 aa).

A signal peptide spans 1–25 (MIISRPLCSFVFAGLSFAVILPAQA). Residues 202-223 (AQQAQALQLAAARNQRFALERG) constitute a propeptide, spacer peptide. Ser-224 serves as the catalytic Nucleophile. Residues 731–746 (ESSNPQSAHSSDQTEA) are compositionally biased toward polar residues. The tract at residues 731-750 (ESSNPQSAHSSDQTEAFSKK) is disordered.

The protein belongs to the peptidase S45 family. In terms of assembly, heterodimer of an alpha subunit and a beta subunit processed from the same precursor.

The protein resides in the periplasm. It catalyses the reaction an N-acyl-L-homoserine lactone + H2O = L-homoserine lactone + a carboxylate. Catalyzes the deacylation of acyl-homoserine lactone (AHL or acyl-HSL), releasing homoserine lactone (HSL) and the corresponding fatty acid. Possesses a specificity for the degradation of long-chain acyl-HSLs (side chains of 11 to 14 carbons in length). The protein is Acyl-homoserine lactone acylase PvdQ (pvdQ) of Pseudomonas syringae pv. syringae (strain B728a).